Here is a 120-residue protein sequence, read N- to C-terminus: Large ribosomal subunit protein uL18 (120 aa).

The protein belongs to the universal ribosomal protein uL18 family. In terms of assembly, part of the 50S ribosomal subunit; part of the 5S rRNA/L5/L18/L25 subcomplex. Contacts the 5S and 23S rRNAs.

Functionally, this is one of the proteins that bind and probably mediate the attachment of the 5S RNA into the large ribosomal subunit, where it forms part of the central protuberance. The protein is Large ribosomal subunit protein uL18 of Paramagnetospirillum magneticum (strain ATCC 700264 / AMB-1) (Magnetospirillum magneticum).